A 124-amino-acid polypeptide reads, in one-letter code: MPREQKQVRELQEGSYVMMDESPCEINSYSTAKPGKHGSAKARVEGNGVFDDRKRSLSQPVDAKVWVPIIERKQGQVVSVTGSDAQIMDLDNYQTFTMRVPEDQDMSPDDEIEYLEYEGQRKIV.

Lysine 36 carries the hypusine modification.

It belongs to the eIF-5A family.

The protein localises to the cytoplasm. Functionally, functions by promoting the formation of the first peptide bond. The protein is Translation initiation factor 5A of Haloquadratum walsbyi (strain DSM 16790 / HBSQ001).